We begin with the raw amino-acid sequence, 262 residues long: Nurim (262 aa).

Topologically, residues 1-4 (MAPA) are nuclear. A helical transmembrane segment spans residues 5–28 (LLLVPAALASFVLAFGTGVEFVRF). Residues 29–58 (TSLRPLLGGIPESGGPDARHGWLAALQDRS) lie on the Perinuclear space side of the membrane. Residues 59-80 (ILASLAWDLCLLLLFVVQHSLM) form a helical membrane-spanning segment. The Nuclear portion of the chain corresponds to 81 to 97 (ATEAVKAWTSRYFGVLQ). A helical transmembrane segment spans residues 98 to 114 (RSLYVACTALALQLVMR). The Perinuclear space portion of the chain corresponds to 115–133 (YWEATPRGPVLWEARAEPW). The chain crosses the membrane as a helical span at residues 134-164 (ATWVPLLCFVLHVVSWLLIFSILLVFDYAEL). Over 165–191 (MGLKQVYYHVLGLGEPLSLKSPRALRL) the chain is Nuclear. Residues 192 to 210 (FSHLRHPVCVELLTVLWVV) traverse the membrane as a helical segment. The Perinuclear space segment spans residues 211–216 (PTLGTD). A helical membrane pass occupies residues 217 to 234 (RLLLALLFTLYLGLAHGL). Residues 235-262 (DQQDLRYLRSQLQRKLQLLSRPQDGEAE) are Nuclear-facing.

The protein belongs to the nurim family.

The protein resides in the nucleus inner membrane. The polypeptide is Nurim (Nrm) (Rattus norvegicus (Rat)).